Consider the following 997-residue polypeptide: MLGLLRRLFDNNEREIARYYKQVVEPVNRLEAEVEKLPDLAAAYRELKEKHEKGASLDELLPMAFALTRESAKRYLGMRHFDVQLIGGAVLHEGKIAEMKTGEGKTLVATLAVALNALTGKGVHVVTVNDYLARRDAEWMGPVYRGLGLSVGVIQHASTPAERRKAYLADVTYVTNSELGFDYLRDNMAISPDQLVLRHDHPLHYAIIDEVDSILIDEARTPLIISGPAEKATDLYYKMAEIAKKLERGLPAEPGVRKEPTGDYTVEEKNRSVHLTLQGIAKAEKLLGIEGLFSPENMELAHMLIQAIRAKELYHRDRDYIVQDGQVIIVDEFTGRLMPGRRYGEGLHQAIEAKEGVRIERENQTLATITYQNFFRLYEKRAGMTGTAKTEEKEFQEIYGMDVVVVPTNRPVVRKDFPDVVYRTEKGKFYAVVEEIAEKYERGQPVLVGTISIEKSERLSQMLKEPRLYLPRLEMRLELFKKASQKQQGPEWERLRKLLERPAQLKDEDLAPFEGLIPPKGNLRTAWEGLKRAVHTLAVLRQGIPHQVLNAKHHAREAEIVAQAGRSKTVTIATNMAGRGTDIKLGGNPEYLAAALLEKEGFDRYEWKVELFIKKMVAGKEEEARALAQELGIREELLERIREIREECKQDEERVRALGGLFIIGTERHESRRIDNQLRGRAGRQGDPGGSRFYVSFDDDLMRLFASDRVIAMLDRMGFDDSEPIEHPMVTRSIERAQKRVEDRNFAIRKQLLQFDDVLSRQREVIYAQRRLILLGKDEEVKEAAIGMVEETVASLAENFLNPEVHPEDWDLEGLKATLLDTAPQLQDFPFAELRALKAEEAVERLVEAALKAYEAREAELSPPLMRAVERFVILNVVDNAWKEHLHNLDVLRQGIFLRGYGQKDPFQEYKIEATRLFNEMVAFIKSEVAKFLFRLKVEAEPVRPVREAPYVPVPEAKPEPSEVFGVERKRATPPPQPGLSRAERRRLMRQEKKRKK.

Residues Q84, 102–106, and D582 contribute to the ATP site; that span reads GEGKT. Residues 950 to 997 form a disordered region; that stretch reads PYVPVPEAKPEPSEVFGVERKRATPPPQPGLSRAERRRLMRQEKKRKK. Residues 957-971 show a composition bias toward basic and acidic residues; the sequence is AKPEPSEVFGVERKR. Positions 984-997 are enriched in basic residues; the sequence is ERRRLMRQEKKRKK.

The protein belongs to the SecA family. As to quaternary structure, monomer and homodimer. Part of the essential Sec protein translocation apparatus which comprises SecA, SecYEG and auxiliary proteins SecDF. Other proteins may also be involved.

The protein resides in the cell inner membrane. It is found in the cytoplasm. It carries out the reaction ATP + H2O + cellular proteinSide 1 = ADP + phosphate + cellular proteinSide 2.. Functionally, part of the Sec protein translocase complex. Interacts with the SecYEG preprotein conducting channel. Has a central role in coupling the hydrolysis of ATP to the transfer of proteins into and across the cell membrane, serving as an ATP-driven molecular motor driving the stepwise translocation of polypeptide chains across the membrane. The protein is Protein translocase subunit SecA of Thermus thermophilus (strain ATCC BAA-163 / DSM 7039 / HB27).